Reading from the N-terminus, the 111-residue chain is Ribonuclease P protein component (111 aa).

Belongs to the RnpA family. In terms of assembly, consists of a catalytic RNA component (M1 or rnpB) and a protein subunit.

It catalyses the reaction Endonucleolytic cleavage of RNA, removing 5'-extranucleotides from tRNA precursor.. In terms of biological role, RNaseP catalyzes the removal of the 5'-leader sequence from pre-tRNA to produce the mature 5'-terminus. It can also cleave other RNA substrates such as 4.5S RNA. The protein component plays an auxiliary but essential role in vivo by binding to the 5'-leader sequence and broadening the substrate specificity of the ribozyme. The chain is Ribonuclease P protein component from Clostridium botulinum (strain Okra / Type B1).